The sequence spans 208 residues: UPF0637 protein BCQ_3749 (208 aa).

The protein belongs to the UPF0637 family.

This is UPF0637 protein BCQ_3749 from Bacillus cereus (strain Q1).